The chain runs to 140 residues: Transcription antitermination protein NusB (140 aa).

The protein belongs to the NusB family.

Its function is as follows. Involved in transcription antitermination. Required for transcription of ribosomal RNA (rRNA) genes. Binds specifically to the boxA antiterminator sequence of the ribosomal RNA (rrn) operons. The protein is Transcription antitermination protein NusB of Thermoanaerobacter pseudethanolicus (strain ATCC 33223 / 39E) (Clostridium thermohydrosulfuricum).